Reading from the N-terminus, the 303-residue chain is uncharacterized protein (303 aa).

Residues 183–281 (KDILFYLNNN…GCSPSDYRRQ (99 aa)) form the HTH araC/xylS-type domain. 2 DNA-binding regions (H-T-H motif) span residues 200 to 221 (EQLS…TKEY) and 248 to 271 (QAEI…LRHV).

This is an uncharacterized protein from Escherichia coli (strain K12).